The following is a 428-amino-acid chain: Tol-Pal system protein TolB (428 aa).

An N-terminal signal peptide occupies residues 1-23 (MRRLYQTVCTLALLLVGLQAAHA).

The protein belongs to the TolB family. As to quaternary structure, the Tol-Pal system is composed of five core proteins: the inner membrane proteins TolA, TolQ and TolR, the periplasmic protein TolB and the outer membrane protein Pal. They form a network linking the inner and outer membranes and the peptidoglycan layer.

The protein localises to the periplasm. In terms of biological role, part of the Tol-Pal system, which plays a role in outer membrane invagination during cell division and is important for maintaining outer membrane integrity. This Alkalilimnicola ehrlichii (strain ATCC BAA-1101 / DSM 17681 / MLHE-1) protein is Tol-Pal system protein TolB.